Consider the following 751-residue polypeptide: Phosphoribosylformylglycinamidine synthase subunit PurL (751 aa).

His54 is a catalytic residue. Tyr57 and Lys106 together coordinate ATP. Glu108 contacts Mg(2+). Substrate is bound by residues 109 to 112 and Arg131; that span reads SHNH. The Proton acceptor role is filled by His110. Asp132 lines the Mg(2+) pocket. Gln256 provides a ligand contact to substrate. Asp284 is a Mg(2+) binding site. Position 328 to 330 (328 to 330) interacts with substrate; the sequence is ESQ. Positions 516 and 553 each coordinate ATP. Asn554 is a binding site for Mg(2+). Ser556 contributes to the substrate binding site.

It belongs to the FGAMS family. As to quaternary structure, monomer. Part of the FGAM synthase complex composed of 1 PurL, 1 PurQ and 2 PurS subunits.

It localises to the cytoplasm. The catalysed reaction is N(2)-formyl-N(1)-(5-phospho-beta-D-ribosyl)glycinamide + L-glutamine + ATP + H2O = 2-formamido-N(1)-(5-O-phospho-beta-D-ribosyl)acetamidine + L-glutamate + ADP + phosphate + H(+). Its pathway is purine metabolism; IMP biosynthesis via de novo pathway; 5-amino-1-(5-phospho-D-ribosyl)imidazole from N(2)-formyl-N(1)-(5-phospho-D-ribosyl)glycinamide: step 1/2. In terms of biological role, part of the phosphoribosylformylglycinamidine synthase complex involved in the purines biosynthetic pathway. Catalyzes the ATP-dependent conversion of formylglycinamide ribonucleotide (FGAR) and glutamine to yield formylglycinamidine ribonucleotide (FGAM) and glutamate. The FGAM synthase complex is composed of three subunits. PurQ produces an ammonia molecule by converting glutamine to glutamate. PurL transfers the ammonia molecule to FGAR to form FGAM in an ATP-dependent manner. PurS interacts with PurQ and PurL and is thought to assist in the transfer of the ammonia molecule from PurQ to PurL. The protein is Phosphoribosylformylglycinamidine synthase subunit PurL of Nocardioides sp. (strain ATCC BAA-499 / JS614).